The following is a 113-amino-acid chain: MNDIQIPIIFTDAAAKKVKSLIEGEDNPNLRLRVYITGGGCSGFQYGFTFDDQVNDGDLTIENQNVGLVVDPMSLQYLIGGTVDYTEGLDGSRFVVNNPNATSTCGCGSSFSI.

Iron-sulfur cluster contacts are provided by Cys-41, Cys-105, and Cys-107.

This sequence belongs to the HesB/IscA family. Homodimer. The cofactor is iron-sulfur cluster.

Required for insertion of 4Fe-4S clusters for at least IspG. The polypeptide is Iron-sulfur cluster insertion protein ErpA (Actinobacillus pleuropneumoniae serotype 3 (strain JL03)).